We begin with the raw amino-acid sequence, 464 residues long: Asparagine--tRNA ligase (464 aa).

This sequence belongs to the class-II aminoacyl-tRNA synthetase family. As to quaternary structure, homodimer.

The protein resides in the cytoplasm. The enzyme catalyses tRNA(Asn) + L-asparagine + ATP = L-asparaginyl-tRNA(Asn) + AMP + diphosphate + H(+). This chain is Asparagine--tRNA ligase, found in Clostridium botulinum (strain Alaska E43 / Type E3).